The following is a 202-amino-acid chain: Putative NADH dehydrogenase/NAD(P)H nitroreductase SCO7141 (202 aa).

This sequence belongs to the nitroreductase family. HadB/RutE subfamily. FMN is required as a cofactor.

The sequence is that of Putative NADH dehydrogenase/NAD(P)H nitroreductase SCO7141 from Streptomyces coelicolor (strain ATCC BAA-471 / A3(2) / M145).